Consider the following 454-residue polypeptide: MMTKETIVAQATPIGRGGVGILRVSGPLATEVAKAVVDKELKPRMANYLPFKDEDGTILDQGIALYFKSPNSFTGEDVVEFQGHGGQVVLDLLLKRILQVKGVRLARPGEFSEQAFLNDKLDLAQAEAIADLINASSEQAARSALKSLQGEFSKKINQLVDSVIYLRTYVEAAIDFPDEEIDFLADGKIEGHLNDLIGQLDKVRSEAKQGSILREGMKVVIAGRPNAGKSSLLNALAGREAAIVTDIAGTTRDVLREHIHIDGMPLHIIDTAGLRDATDEVERIGITRAWNEIEQADRVILMLDSTDPDSKDLDQAKAEFLSKLPGNIPVTIVRNKSDLSGEKESIEEQEGFTVIRLSAQTQQGVSLLREHLKQSMGYQTGTEGGFLARRRHLEALEHAAEHLQIGRVQLTQFHAGELLAEELRIVQDYLGEITGKFTSDDLLGNIFSSFCIGK.

3 residues coordinate (6S)-5-formyl-5,6,7,8-tetrahydrofolate: Arg23, Glu80, and Lys120. Residues 216-377 (GMKVVIAGRP…LREHLKQSMG (162 aa)) enclose the TrmE-type G domain. Residue Asn226 participates in K(+) binding. Residues 226–231 (NAGKSS), 245–251 (TDIAGTT), and 270–273 (DTAG) contribute to the GTP site. Ser230 is a binding site for Mg(2+). Positions 245, 247, and 250 each coordinate K(+). Position 251 (Thr251) interacts with Mg(2+). Lys454 is a binding site for (6S)-5-formyl-5,6,7,8-tetrahydrofolate.

The protein belongs to the TRAFAC class TrmE-Era-EngA-EngB-Septin-like GTPase superfamily. TrmE GTPase family. Homodimer. Heterotetramer of two MnmE and two MnmG subunits. K(+) serves as cofactor.

It is found in the cytoplasm. In terms of biological role, exhibits a very high intrinsic GTPase hydrolysis rate. Involved in the addition of a carboxymethylaminomethyl (cmnm) group at the wobble position (U34) of certain tRNAs, forming tRNA-cmnm(5)s(2)U34. This is tRNA modification GTPase MnmE from Mannheimia succiniciproducens (strain KCTC 0769BP / MBEL55E).